Reading from the N-terminus, the 234-residue chain is Large ribosomal subunit protein uL1 (234 aa).

It belongs to the universal ribosomal protein uL1 family. As to quaternary structure, part of the 50S ribosomal subunit.

In terms of biological role, binds directly to 23S rRNA. The L1 stalk is quite mobile in the ribosome, and is involved in E site tRNA release. Functionally, protein L1 is also a translational repressor protein, it controls the translation of the L11 operon by binding to its mRNA. This chain is Large ribosomal subunit protein uL1, found in Desulfosudis oleivorans (strain DSM 6200 / JCM 39069 / Hxd3) (Desulfococcus oleovorans).